The sequence spans 380 residues: Probable pectin lyase A (380 aa).

A signal peptide spans 1–20 (MRYTSLFTAVTAALASTAAA). Cystine bridges form between cysteine 83–cysteine 102 and cysteine 92–cysteine 226. An N-linked (GlcNAc...) asparagine glycan is attached at asparagine 129. Residue arginine 256 is part of the active site. A disulfide bridge connects residues cysteine 323 and cysteine 331.

This sequence belongs to the polysaccharide lyase 1 family.

The protein resides in the secreted. The enzyme catalyses Eliminative cleavage of (1-&gt;4)-alpha-D-galacturonan methyl ester to give oligosaccharides with 4-deoxy-6-O-methyl-alpha-D-galact-4-enuronosyl groups at their non-reducing ends.. Functionally, pectinolytic enzymes consist of four classes of enzymes: pectin lyase, polygalacturonase, pectin methylesterase and rhamnogalacturonase. Among pectinolytic enzymes, pectin lyase is the most important in depolymerization of pectin, since it cleaves internal glycosidic bonds of highly methylated pectins. In Aspergillus fumigatus (strain ATCC MYA-4609 / CBS 101355 / FGSC A1100 / Af293) (Neosartorya fumigata), this protein is Probable pectin lyase A (pelA).